Reading from the N-terminus, the 210-residue chain is Molybdenum cofactor guanylyltransferase (210 aa).

GTP contacts are provided by residues 9-11, K21, D66, and D95; that span reads LAG. Residue D95 participates in Mg(2+) binding.

This sequence belongs to the MobA family. Monomer. Mg(2+) is required as a cofactor.

Its subcellular location is the cytoplasm. The enzyme catalyses Mo-molybdopterin + GTP + H(+) = Mo-molybdopterin guanine dinucleotide + diphosphate. Its function is as follows. Transfers a GMP moiety from GTP to Mo-molybdopterin (Mo-MPT) cofactor (Moco or molybdenum cofactor) to form Mo-molybdopterin guanine dinucleotide (Mo-MGD) cofactor. The sequence is that of Molybdenum cofactor guanylyltransferase from Syntrophotalea carbinolica (strain DSM 2380 / NBRC 103641 / GraBd1) (Pelobacter carbinolicus).